We begin with the raw amino-acid sequence, 404 residues long: Probable glucan endo-1,6-beta-glucosidase B (404 aa).

The first 20 residues, 1-20 (MTTYQTLFLIPLAISTLVTA), serve as a signal peptide directing secretion. N-linked (GlcNAc...) asparagine glycosylation is found at asparagine 33 and asparagine 130. The active-site Proton donor is glutamate 222. Residues asparagine 253 and asparagine 299 are each glycosylated (N-linked (GlcNAc...) asparagine). Glutamate 324 serves as the catalytic Nucleophile.

It belongs to the glycosyl hydrolase 5 (cellulase A) family.

Its subcellular location is the secreted. It carries out the reaction Random hydrolysis of (1-&gt;6)-linkages in (1-&gt;6)-beta-D-glucans.. In terms of biological role, beta-glucanases participate in the metabolism of beta-glucan, the main structural component of the cell wall. Acts on lutean, pustulan and 1,6-oligo-beta-D-glucosides. This Aspergillus terreus (strain NIH 2624 / FGSC A1156) protein is Probable glucan endo-1,6-beta-glucosidase B (exgB).